A 207-amino-acid chain; its full sequence is MSRILLTGFEPFGGEKVNPSELAVKQLEGKTIAGLEVVAGVLPVVTVKCIDEAVKLIEKYEPVAVLNVGQAGGRVELSIEKVAINVKDYRIPDNEGNQIRYAPVVEGGPDAYFATIPVEKIADSLVEKVIPASVSYTAGTYCCNEVFYGVSHYLRNNKPGVLNGFIHIPFILEQAAGAKPPRASMPLEVIVKGLEIAVEVVAEGLEK.

Residues glutamate 80, cysteine 143, and histidine 167 contribute to the active site.

The protein belongs to the peptidase C15 family. As to quaternary structure, homotetramer.

It localises to the cytoplasm. It carries out the reaction Release of an N-terminal pyroglutamyl group from a polypeptide, the second amino acid generally not being Pro.. In terms of biological role, removes 5-oxoproline from various penultimate amino acid residues except L-proline. The protein is Pyrrolidone-carboxylate peptidase of Coprothermobacter proteolyticus (strain ATCC 35245 / DSM 5265 / OCM 4 / BT).